The sequence spans 426 residues: Serine--tRNA ligase (426 aa).

231-233 (TAE) lines the L-serine pocket. Residue 262-264 (RSE) participates in ATP binding. Position 285 (Glu285) interacts with L-serine. 349–352 (EISS) provides a ligand contact to ATP. Residue Ser384 coordinates L-serine.

The protein belongs to the class-II aminoacyl-tRNA synthetase family. Type-1 seryl-tRNA synthetase subfamily. As to quaternary structure, homodimer. The tRNA molecule binds across the dimer.

It localises to the cytoplasm. It catalyses the reaction tRNA(Ser) + L-serine + ATP = L-seryl-tRNA(Ser) + AMP + diphosphate + H(+). The catalysed reaction is tRNA(Sec) + L-serine + ATP = L-seryl-tRNA(Sec) + AMP + diphosphate + H(+). It functions in the pathway aminoacyl-tRNA biosynthesis; selenocysteinyl-tRNA(Sec) biosynthesis; L-seryl-tRNA(Sec) from L-serine and tRNA(Sec): step 1/1. In terms of biological role, catalyzes the attachment of serine to tRNA(Ser). Is also able to aminoacylate tRNA(Sec) with serine, to form the misacylated tRNA L-seryl-tRNA(Sec), which will be further converted into selenocysteinyl-tRNA(Sec). The chain is Serine--tRNA ligase from Laribacter hongkongensis (strain HLHK9).